Reading from the N-terminus, the 791-residue chain is uncharacterized protein (791 aa).

The disordered stretch occupies residues 267–288 (APGESSAQSSYEQSTRAGDSAP). Positions 271–283 (SSAQSSYEQSTRA) are enriched in polar residues.

This is an uncharacterized protein from Treponema pallidum (strain Nichols).